We begin with the raw amino-acid sequence, 235 residues long: Repeat element protein (235 aa).

The segment at 57–235 (IFQELLERLS…ARRKKCRFSQ (179 aa)) is repeat element.

The protein is Repeat element protein of Campoletis sonorensis (CsIV).